An 81-amino-acid chain; its full sequence is Protein RALF-like 7 (81 aa).

A signal peptide spans 1–29 (MSARKKNRIHVFFVSIMIIISLVSGFGEG). 2 disulfides stabilise this stretch: cysteine 46–cysteine 54 and cysteine 66–cysteine 72.

The protein belongs to the plant rapid alkalinization factor (RALF) family.

Its subcellular location is the secreted. Its function is as follows. Cell signaling peptide that may regulate plant stress, growth, and development. Mediates a rapid alkalinization of extracellular space by mediating a transient increase in the cytoplasmic Ca(2+) concentration leading to a calcium-dependent signaling events through a cell surface receptor and a concomitant activation of some intracellular mitogen-activated protein kinases. The sequence is that of Protein RALF-like 7 (RALFL7) from Arabidopsis thaliana (Mouse-ear cress).